The chain runs to 1620 residues: MVKREINVCQQTWALLCKNLLRKKRLKRDTFLEFLYTALILLSLILFLQLHEVYDFSSLPDVDLGRIDSFNDSTFMIVYTPITPTTQRIMDRVSLVSYMTGRKILASPNEENMTELISMRFSDVVGVIFTNAYSYNLKFIKGARIPTIKEHQDHTAHCHSYGEIIYCGLSEFWRDGFVALQAAINAAIIEVTTNHSVMEEMMSLTGKYIKIDSFVGQEGTTTDCFLFFCIIRFSPLTYYISAGVTRERKKMKGLMAVMGLRDSAFWLSWGLLYGVIVFVVTLLSTTIVKLVQFVFLTGFMVIFSLFFFYGLSLISLSFLMSVLLKKSFLTDLVVFLLTVSCGSLGFTALYRYLPVSLEWLLSLLSPFAFMLGMVQLLRLDYDVNSNADPMGNPNEVIGTIFMLFFDGVFYLLLTFYFEKVLPSKSFHDKTYWHACKSHFFLIDYSFYIRTALDNETDYEFSDDSFEPVSMEFHGKEAIRIRNLTKDYIQKSKRTEALKDLTLDVYKGQITAILGHSGAGKSTLLNVLSGLCVPTKGWVTIHNNKLSEMTDLENISKLTGVCPQCNVQFDFLTVRENLRLFAKIKGIQAHEVDNEVQRVLLELDMKNTQNILVQNLSGGQKRKLTFGIAILGDPQIFLLDEPTAGLDPFSRHRVWNFLKERRADRVVLFSTQFMDEADILADRKVFISKGKLKCAGSSLFLKKKWGIGYHLSLQLSETCVHERITSLVKQHIPDSKLSAESEGKLSYILPLERTNKFPDLYRDLERSPDLGIENYGVSITTLTEVFLKLEGKSSIDQSDIGMTEDVQAGGARSPERFAEVEQLVSLLNGRCKMKGGMALWWQQLCAVTRLRFLKLKHERKSIVILILVLGIGLLHILSANIYRMVRQSDYCWELAPHMYFLTPGQQPQPPLTNLLIVNKTGAKIDDFIHSLEQQNIALEVDAFGTRNGTEDSQYNGAIILSGDEKNYNFTLACNTKRLNCFPVLVDIVSNGLLGLFAPSAHIQTDRSTFPEENDHRKFDYLAYFFLWVLLMACVPPYISMTSIDDYKNRAQFQLWISGLSPSAYWFGQALFEVPVYCALILSIFIAFYASAPPESKFTVGDLFIQILYVGGYAMSVIFMTYVISFIYRKGRKNSGLWSLCFYIVSFFSMCFMLIDYFRDISLFVLIALVPPATLGGCTLLHFENREFSEIIFEPEREYSYLFFLAPLLHFAIFVVILRCMERKFGMKTMRTDPVFRISPRSDRVFNNPEDPDGEDEDVSQERVWTANALTSADFQEKPAIIASCLRKEYKGKKKCFVLKSKKKIATRNISFCVRKGEVVGLLGHNGAGKSTSIKMITGETKPSAGQVLLKGSSTGDTPGFLGYCPQENALWLNLTVREHLEIFAAIKGMRKSDANVAIERLADALKLQDQLKSPVKTLSEGVKRKLCFVLSILGNPSVVLLDEPSTGMDPEGQQQMWQAIQATFSNTERGALLTTHYMAEAEAVCDRVAIMVSGRLRCIGSIQHLKSKFGKEYLLEMKVKTPSQVEPLNTEIMRLFPQAARQERYSSLMVYKLPREDVQPLSQAFFKLETVKQSFDLEEYSLSQSTLEQVFLELSKEQELDGFEEELDPSVKWKLLPQEEA.

Transmembrane regions (helical) follow at residues 30–50, 224–244, 263–283, 294–314, 328–348, 357–377, and 397–417; these read TFLE…FLQL, CFLF…SAGV, SAFW…VTLL, VFLT…LSLI, FLTD…GFTA, LEWL…VQLL, and IGTI…TFYF. Residues Asn-454 and Asn-482 are each glycosylated (N-linked (GlcNAc...) asparagine). Residues 478-713 form the ABC transporter 1 domain; it reads IRIRNLTKDY…WGIGYHLSLQ (236 aa). Position 514 to 521 (514 to 521) interacts with ATP; sequence GHSGAGKS. A helical transmembrane segment spans residues 861-881; the sequence is IVILILVLGIGLLHILSANIY. Asn-967 is a glycosylation site (N-linked (GlcNAc...) asparagine). Helical transmembrane passes span 979–999, 1019–1039, 1068–1088, 1105–1125, 1133–1153, 1159–1179, and 1196–1216; these read CFPV…APSA, YLAY…YISM, ALFE…AFYA, ILYV…ISFI, SGLW…FMLI, ISLF…CTLL, and EYSY…VVIL. The ABC transporter 2 domain occupies 1284-1517; that stretch reads LRKEYKGKKK…FGKEYLLEMK (234 aa). Residue 1322 to 1329 coordinates ATP; that stretch reads GHNGAGKS.

This sequence belongs to the ABC transporter superfamily. ABCA family. In terms of tissue distribution, expressed in lung, heart, liver, skeletal muscle and testis. Highly expressed in the liver, and is also abundant in heart and skeletal muscle. Highly expressed in heart.

Its subcellular location is the cell membrane. It is found in the basolateral cell membrane. It carries out the reaction taurocholate(in) + ATP + H2O = taurocholate(out) + ADP + phosphate + H(+). The enzyme catalyses cholesterol(in) + ATP + H2O = cholesterol(out) + ADP + phosphate + H(+). Its activity is regulated as follows. Cholesterol efflux is increased by extracellularly applied taurocholate. Its function is as follows. Mediates cholesterol and taurocholate efflux. Through the interaction with ABCA1 potentiates the cholesterol efflux to lipid-free APOA1, in turn regulates high-density lipoprotein cholesterol levels. This chain is ABC-type organic anion transporter ABCA8A, found in Mus musculus (Mouse).